A 391-amino-acid chain; its full sequence is Histamine H4 receptor (391 aa).

Residues 1 to 19 (MSESNSTGILPPAAQVPLA) lie on the Extracellular side of the membrane. N5 carries an N-linked (GlcNAc...) asparagine glycan. A helical transmembrane segment spans residues 20-40 (FLMSSFAFAIMVGNAVVILAF). Residues 41–52 (VVDRNLRHRSNY) are Cytoplasmic-facing. Residues 53–73 (FFLNLAISDFLVGLISIPLYI) traverse the membrane as a helical segment. Over 74–87 (PHVLFNWNFGSGIC) the chain is Extracellular. C87 and C166 are disulfide-bonded. A helical transmembrane segment spans residues 88 to 108 (MFWLITDYLLCTASVYNIVLI). Residues 109–131 (SYDRYQSVSNAVSYRAQHTGIMK) are Cytoplasmic-facing. Residues 132–152 (IVAQMVAVWILAFLVNGPMIL) form a helical membrane-spanning segment. The Extracellular segment spans residues 153 to 174 (ASDSWKNSTNTKDCEPGFVTEW). An N-linked (GlcNAc...) asparagine glycan is attached at N159. The chain crosses the membrane as a helical span at residues 175-195 (YILTITMLLEFLLPVISVAYF). The Cytoplasmic segment spans residues 196–306 (NVQIYWSLWK…LLRGRKLARS (111 aa)). The interval 238–258 (TSNPGLKESAASRHSESPRRK) is disordered. The span at 247-256 (AASRHSESPR) shows a compositional bias: basic and acidic residues. The chain crosses the membrane as a helical span at residues 307–327 (LAILLSAFAICWAPYCLFTIV). Topologically, residues 328-343 (LSTYPRTERPKSVWYS) are extracellular. A helical membrane pass occupies residues 344-364 (IAFWLQWFNSFVNPFLYPLCH). Residues 365-391 (RRFQKAFWKILCVTKQPALSQNQSVSS) lie on the Cytoplasmic side of the membrane.

It belongs to the G-protein coupled receptor 1 family. As to quaternary structure, interacts with TSPAN4.

It is found in the cell membrane. Its function is as follows. The H4 subclass of histamine receptors could mediate the histamine signals in peripheral tissues. Displays a significant level of constitutive activity (spontaneous activity in the absence of agonist). The protein is Histamine H4 receptor (Hrh4) of Mus musculus (Mouse).